A 419-amino-acid polypeptide reads, in one-letter code: Isocitrate dehydrogenase [NADP] (419 aa).

Threonine 102 is a binding site for NADP(+). D-threo-isocitrate is bound by residues serine 111, asparagine 113, arginine 117, arginine 127, and arginine 151. Aspartate 306 is a Mg(2+) binding site. Residues 338-344, asparagine 351, tyrosine 390, and arginine 394 each bind NADP(+); that span reads HGSAPKY.

Belongs to the isocitrate and isopropylmalate dehydrogenases family. In terms of assembly, homodimer. Mg(2+) serves as cofactor. The cofactor is Mn(2+).

The catalysed reaction is D-threo-isocitrate + NADP(+) = 2-oxoglutarate + CO2 + NADPH. Functionally, catalyzes the oxidative decarboxylation of isocitrate to 2-oxoglutarate and carbon dioxide with the concomitant reduction of NADP(+). The protein is Isocitrate dehydrogenase [NADP] of Haloferax volcanii (strain ATCC 29605 / DSM 3757 / JCM 8879 / NBRC 14742 / NCIMB 2012 / VKM B-1768 / DS2) (Halobacterium volcanii).